Reading from the N-terminus, the 364-residue chain is 3-isopropylmalate dehydrogenase (364 aa).

Gly78–Glu91 contacts NAD(+). The substrate site is built by Arg99, Arg109, Arg138, and Asp228. Mg(2+)-binding residues include Asp228, Asp252, and Asp256. Gly286–Asn298 is a binding site for NAD(+).

It belongs to the isocitrate and isopropylmalate dehydrogenases family. LeuB type 1 subfamily. Homodimer. It depends on Mg(2+) as a cofactor. The cofactor is Mn(2+).

It localises to the cytoplasm. The enzyme catalyses (2R,3S)-3-isopropylmalate + NAD(+) = 4-methyl-2-oxopentanoate + CO2 + NADH. It functions in the pathway amino-acid biosynthesis; L-leucine biosynthesis; L-leucine from 3-methyl-2-oxobutanoate: step 3/4. Catalyzes the oxidation of 3-carboxy-2-hydroxy-4-methylpentanoate (3-isopropylmalate) to 3-carboxy-4-methyl-2-oxopentanoate. The product decarboxylates to 4-methyl-2 oxopentanoate. The protein is 3-isopropylmalate dehydrogenase of Buchnera aphidicola subsp. Uroleucon obscurum.